The primary structure comprises 508 residues: MGLPWYRVHTVVLNDPGRLLSVHIMHTALVAGWAGSMALYELAVFDPSDPVLDPMWRQGMFVIPFMTRLGITNSWGGWNITGGTITNPGLWSYEGVAGAHIVFSGLCFLAAIWHWVYWDLEIFCDERTGKPSLDLPKIFGIHLFLSGVACFGFGAFHVTGLYGPGIWVSDPYGLTGKVQPVNPAWGVEGFDPFVPGGIASHHIAAGTLGILAGLFHLSVRPPQRLYKGLRMGNIETVLSSSIAAVFFAAFVVAGTMWYGSATTPIELFGPTRYQWDQGYFQQEIYRRVSAGLAENQSLSEAWSKIPEKLAFYDYIGNNPAKGGLFRAGSMDNGDGIAVGWLGHPVFRNKEGRELFVRRMPTFFETFPVVLVDGDGIVRADVPFRRAESKYSVEQVGVTVEFYGGELNGVSYSDPATVKKYARRAQLGEIFELDRATLKSDGVFRSSPRGWFTFGHASFALLFFFGHIWHGSRTLFRDVFAGIDPDLDAQVEFGAFQKLGDPTTKRQAV.

6 consecutive transmembrane segments (helical) span residues 21-36, 101-115, 140-156, 203-218, 237-252, and 457-472; these read SVHIMHTALVAGWAGS, IVFSGLCFLAAIWHW, GIHLFLSGVACFGFGAF, IAAGTLGILAGLFHLS, VLSSSIAAVFFAAFVV, and SFALLFFFGHIWHGSR.

It belongs to the PsbB/PsbC family. PsbB subfamily. As to quaternary structure, PSII is composed of 1 copy each of membrane proteins PsbA, PsbB, PsbC, PsbD, PsbE, PsbF, PsbH, PsbI, PsbJ, PsbK, PsbL, PsbM, PsbT, PsbX, PsbY, PsbZ, Psb30/Ycf12, at least 3 peripheral proteins of the oxygen-evolving complex and a large number of cofactors. It forms dimeric complexes. The cofactor is Binds multiple chlorophylls. PSII binds additional chlorophylls, carotenoids and specific lipids..

It is found in the plastid. The protein resides in the chloroplast thylakoid membrane. Functionally, one of the components of the core complex of photosystem II (PSII). It binds chlorophyll and helps catalyze the primary light-induced photochemical processes of PSII. PSII is a light-driven water:plastoquinone oxidoreductase, using light energy to abstract electrons from H(2)O, generating O(2) and a proton gradient subsequently used for ATP formation. This Lepidium virginicum (Virginia pepperweed) protein is Photosystem II CP47 reaction center protein.